A 345-amino-acid polypeptide reads, in one-letter code: tRNA N6-adenosine threonylcarbamoyltransferase (345 aa).

Fe cation contacts are provided by His117 and His121. Substrate-binding positions include 140–144 (LVSGG), Asp173, Gly186, and Asn279. Asp307 contributes to the Fe cation binding site.

It belongs to the KAE1 / TsaD family. Fe(2+) is required as a cofactor.

It is found in the cytoplasm. It carries out the reaction L-threonylcarbamoyladenylate + adenosine(37) in tRNA = N(6)-L-threonylcarbamoyladenosine(37) in tRNA + AMP + H(+). In terms of biological role, required for the formation of a threonylcarbamoyl group on adenosine at position 37 (t(6)A37) in tRNAs that read codons beginning with adenine. Is involved in the transfer of the threonylcarbamoyl moiety of threonylcarbamoyl-AMP (TC-AMP) to the N6 group of A37, together with TsaE and TsaB. TsaD likely plays a direct catalytic role in this reaction. In Verminephrobacter eiseniae (strain EF01-2), this protein is tRNA N6-adenosine threonylcarbamoyltransferase.